The chain runs to 257 residues: uncharacterized protein (257 aa).

The helical transmembrane segment at 7 to 27 (IGILEIVVILSILITSVSLAY) threads the bilayer.

It localises to the membrane. This is an uncharacterized protein from Methanocaldococcus jannaschii (strain ATCC 43067 / DSM 2661 / JAL-1 / JCM 10045 / NBRC 100440) (Methanococcus jannaschii).